The following is a 360-amino-acid chain: Phospho-N-acetylmuramoyl-pentapeptide-transferase (360 aa).

Helical transmembrane passes span 18 to 38, 73 to 93, 97 to 117, 134 to 154, 168 to 188, 199 to 219, 236 to 256, 263 to 283, 288 to 308, and 338 to 358; these read VFSYVTFRAILGLLTALVFSL, TMGGLLILAGIFVSVLLWGDL, YVLVMLFVLGSFGTIGFIDDY, YILQSLAALVVAVFLYSSSTL, VMPQLGLVFIVLAYFTIVGAS, GLAIMPTVMVAGAFALIAYLS, AGELVIVCTAIVGAGLGFLWF, VFMGDVGSLALGAALGAIAVL, ILLVIMGGVFVMETVSVILQV, and VIVRFWIISLFLVLLGLATLK.

It belongs to the glycosyltransferase 4 family. MraY subfamily. Requires Mg(2+) as cofactor.

The protein localises to the cell inner membrane. It carries out the reaction UDP-N-acetyl-alpha-D-muramoyl-L-alanyl-gamma-D-glutamyl-meso-2,6-diaminopimeloyl-D-alanyl-D-alanine + di-trans,octa-cis-undecaprenyl phosphate = di-trans,octa-cis-undecaprenyl diphospho-N-acetyl-alpha-D-muramoyl-L-alanyl-D-glutamyl-meso-2,6-diaminopimeloyl-D-alanyl-D-alanine + UMP. Its pathway is cell wall biogenesis; peptidoglycan biosynthesis. Catalyzes the initial step of the lipid cycle reactions in the biosynthesis of the cell wall peptidoglycan: transfers peptidoglycan precursor phospho-MurNAc-pentapeptide from UDP-MurNAc-pentapeptide onto the lipid carrier undecaprenyl phosphate, yielding undecaprenyl-pyrophosphoryl-MurNAc-pentapeptide, known as lipid I. The polypeptide is Phospho-N-acetylmuramoyl-pentapeptide-transferase (Shewanella denitrificans (strain OS217 / ATCC BAA-1090 / DSM 15013)).